Reading from the N-terminus, the 65-residue chain is Large ribosomal subunit protein bL35 (65 aa).

Residues 1–21 are disordered; that stretch reads MPKMKTKSGAAKRFTVRAGGT.

This sequence belongs to the bacterial ribosomal protein bL35 family.

The chain is Large ribosomal subunit protein bL35 from Nitrosospira multiformis (strain ATCC 25196 / NCIMB 11849 / C 71).